A 532-amino-acid chain; its full sequence is Type 2 DNA topoisomerase 6 subunit B (532 aa).

ATP-binding positions include N41, D75, 96 to 97 (SK), 105 to 112 (GMYGLGVK), and K427.

Belongs to the TOP6B family. Homodimer. Heterotetramer of two Top6A and two Top6B chains.

It catalyses the reaction ATP-dependent breakage, passage and rejoining of double-stranded DNA.. In terms of biological role, relaxes both positive and negative superturns and exhibits a strong decatenase activity. The polypeptide is Type 2 DNA topoisomerase 6 subunit B (Sulfurisphaera tokodaii (strain DSM 16993 / JCM 10545 / NBRC 100140 / 7) (Sulfolobus tokodaii)).